A 942-amino-acid polypeptide reads, in one-letter code: Inter alpha-trypsin inhibitor, heavy chain 4 (942 aa).

The signal sequence occupies residues 1–28; sequence MKSPAPAHMWNLVLFLPSLLAVLPTTTA. Residues 29–148 enclose the VIT domain; that stretch reads EKNGIDIYSL…KITFELIYQE (120 aa). A glycan (N-linked (GlcNAc...) asparagine) is linked at N81. A VWFA domain is found at 274-457; that stretch reads NVIFVIDKSG…LQLQDFYHEV (184 aa). N517 and N577 each carry an N-linked (GlcNAc...) asparagine glycan. Positions 552–586 form a coiled coil; that stretch reads TIQQQLEQRISASGAELEALEAQVLNLSLKYNFVT. 2 disordered regions span residues 658-698 and 726-745; these read RQYI…SDFS and EKSKESTIPEESPNPDHPQV. The span at 663–690 shows a compositional bias: pro residues; the sequence is PGFPGPPGPPGFPAPPGPPGFPAPPGPP. O-linked (GalNAc...) threonine glycosylation is present at T732. A disulfide bridge links C761 with C937. Residue N874 is glycosylated (N-linked (GlcNAc...) asparagine).

Belongs to the ITIH family. Interacts (via C-terminus) with DNAJC1 (via SANT 2 domain). In terms of processing, may be O-glycosylated. N-glycosylated. In terms of tissue distribution, highly expressed in liver. Weak expression in lung and heart.

The protein resides in the secreted. Its function is as follows. Type II acute-phase protein (APP) involved in inflammatory responses to trauma. May also play a role in liver development or regeneration. This chain is Inter alpha-trypsin inhibitor, heavy chain 4 (Itih4), found in Mus musculus (Mouse).